Reading from the N-terminus, the 261-residue chain is 4-phosphopantoate--beta-alanine ligase (261 aa).

ATP is bound by residues R17, R39, 181–182 (DL), 187–188 (RS), and 199–200 (NI).

It belongs to the archaeal phosphopantothenate synthetase family. As to quaternary structure, homodimer.

The catalysed reaction is (R)-4-phosphopantoate + beta-alanine + ATP = (R)-4'-phosphopantothenate + AMP + diphosphate + H(+). It functions in the pathway cofactor biosynthesis; coenzyme A biosynthesis. In terms of biological role, catalyzes the condensation of (R)-4-phosphopantoate and beta-alanine to 4'-phosphopantothenate in the CoA biosynthesis pathway. The sequence is that of 4-phosphopantoate--beta-alanine ligase from Thermococcus onnurineus (strain NA1).